Here is a 151-residue protein sequence, read N- to C-terminus: Large ribosomal subunit protein uL13 (151 aa).

Belongs to the universal ribosomal protein uL13 family. In terms of assembly, part of the 50S ribosomal subunit.

Its function is as follows. This protein is one of the early assembly proteins of the 50S ribosomal subunit, although it is not seen to bind rRNA by itself. It is important during the early stages of 50S assembly. The protein is Large ribosomal subunit protein uL13 of Synechococcus sp. (strain JA-2-3B'a(2-13)) (Cyanobacteria bacterium Yellowstone B-Prime).